Here is a 242-residue protein sequence, read N- to C-terminus: MSKRRIAPLTFLRRLLLRILAALAVFWGGGIALFSVVPVPFSAVMAERQISAWLGGEFGYVAHSDWVSMADISPWMGLAVIAAEDQKFPEHWGFDVPAIEKALAHNERNESRIRGASTLSQQTAKNLFLWDGRSWLRKGLEAGLTLGIETVWSKKRILTVYLNIAEFGDGIFGVEAAAQRYFHKPASRLSVSEAALLAAVLPNPIRYKANAPSGYVRSRQAWIMRQMRQLGGESFMTRNQLN.

The helical transmembrane segment at 19 to 39 (ILAALAVFWGGGIALFSVVPV) threads the bilayer.

The protein belongs to the glycosyltransferase 51 family.

The protein resides in the cell inner membrane. The enzyme catalyses [GlcNAc-(1-&gt;4)-Mur2Ac(oyl-L-Ala-gamma-D-Glu-L-Lys-D-Ala-D-Ala)](n)-di-trans,octa-cis-undecaprenyl diphosphate + beta-D-GlcNAc-(1-&gt;4)-Mur2Ac(oyl-L-Ala-gamma-D-Glu-L-Lys-D-Ala-D-Ala)-di-trans,octa-cis-undecaprenyl diphosphate = [GlcNAc-(1-&gt;4)-Mur2Ac(oyl-L-Ala-gamma-D-Glu-L-Lys-D-Ala-D-Ala)](n+1)-di-trans,octa-cis-undecaprenyl diphosphate + di-trans,octa-cis-undecaprenyl diphosphate + H(+). It participates in cell wall biogenesis; peptidoglycan biosynthesis. Functionally, peptidoglycan polymerase that catalyzes glycan chain elongation from lipid-linked precursors. The chain is Biosynthetic peptidoglycan transglycosylase from Salmonella heidelberg (strain SL476).